The chain runs to 116 residues: Vesicle-associated membrane protein 2 (116 aa).

A disordered region spans residues 1–33; the sequence is MSATAATAPPAAPAGEGGPPAPPPNLTSNRRLQ. Ser2 bears the N-acetylserine mark. The Cytoplasmic segment spans residues 2–94; the sequence is SATAATAPPA…KRKYWWKNLK (93 aa). The v-SNARE coiled-coil homology domain maps to 31 to 91; sequence RLQQTQAQVD…AKLKRKYWWK (61 aa). The interval 92-116 is required for interaction with SEPT8; the sequence is NLKMMIILGVICAIILIIIIVYFST. The chain crosses the membrane as a helical; Anchor for type IV membrane protein span at residues 95–114; sequence MMIILGVICAIILIIIIVYF. Residues 115-116 are Vesicular-facing; the sequence is ST.

The protein belongs to the synaptobrevin family. As to quaternary structure, part of the SNARE core complex containing SNAP25, VAMP2 and STX1A; this complex constitutes the basic catalytic machinery of the complex neurotransmitter release apparatus. Recruited to the SNARE complex following binding of the SNARE complex component STX1A to STXBP1. This complex binds to CPLX1. Interacts with POPDC1 and STX4. Interacts with VAPA and VAPB. Interacts with WDFY2, PRKCZ and PRKCI. Forms a complex with WDFY2 and PRKCZ. Interacts (via N-terminus) with KCNB1 (via N-terminus and C-terminus); stimulates the channel inactivation rate of KCNB1. Interacts with SEPT8; the interaction inhibits interaction of VAMP2 with SYP. Interacts with SYP; the interaction is inhibited by interaction with SEPT8. Interacts with PICALM. Interacts with alpha-synuclein/SNCA. Interacts with STX3. In terms of processing, phosphorylated by PRKCZ in vitro and this phosphorylation is increased in the presence of WDFY2. Post-translationally, (Microbial infection) Targeted and hydrolyzed by C.botulinum neurotoxin type B (BoNT/B, botB) which hydrolyzes the 76-Gln-|-Phe-77 bond and probably inhibits neurotransmitter release. (Microbial infection) Targeted and hydrolyzed by C.botulinum neurotoxin type D (BoNT/D, botD) which probably hydrolyzes the 59-Lys-|-Leu-60 bond and inhibits neurotransmitter release. Note that humans are not known to be infected by C.botulinum type D. In terms of processing, (Microbial infection) Targeted and hydrolyzed by C.botulinum neurotoxin type F (BoNT/F, botF) which hydrolyzes the 58-Gln-|-Lys-59 bond and probably inhibits neurotransmitter release. Post-translationally, (Microbial infection) Targeted and hydrolyzed by C.tetani tetanus toxin (tetX) which hydrolyzes the 76-Gln-|-Phe-77 bond and probably inhibits neurotransmitter release. As to expression, nervous system and skeletal muscle.

It localises to the cytoplasmic vesicle. The protein localises to the secretory vesicle. Its subcellular location is the synaptic vesicle membrane. The protein resides in the cell membrane. In terms of biological role, involved in the targeting and/or fusion of transport vesicles to their target membrane. Major SNARE protein of synaptic vesicles which mediates fusion of synaptic vesicles to release neurotransmitters. Essential for fast vesicular exocytosis and activity-dependent neurotransmitter release as well as fast endocytosis that mediates rapid reuse of synaptic vesicles. Modulates the gating characteristics of the delayed rectifier voltage-dependent potassium channel KCNB1. The protein is Vesicle-associated membrane protein 2 of Homo sapiens (Human).